A 205-amino-acid polypeptide reads, in one-letter code: Small ribosomal subunit protein uS4 (205 aa).

An S4 RNA-binding domain is found at 95–163 (RRLDNVVYRL…FKENLESRDP (69 aa)).

This sequence belongs to the universal ribosomal protein uS4 family. In terms of assembly, part of the 30S ribosomal subunit. Contacts protein S5. The interaction surface between S4 and S5 is involved in control of translational fidelity.

In terms of biological role, one of the primary rRNA binding proteins, it binds directly to 16S rRNA where it nucleates assembly of the body of the 30S subunit. With S5 and S12 plays an important role in translational accuracy. The polypeptide is Small ribosomal subunit protein uS4 (Persephonella marina (strain DSM 14350 / EX-H1)).